The sequence spans 152 residues: UPF0178 protein KPK_4355 (152 aa).

This sequence belongs to the UPF0178 family.

In Klebsiella pneumoniae (strain 342), this protein is UPF0178 protein KPK_4355.